Consider the following 128-residue polypeptide: Protein Wnt-10 (128 aa).

Cystine bridges form between cysteine 3/cysteine 17, cysteine 5/cysteine 12, cysteine 74/cysteine 105, cysteine 90/cysteine 100, and cysteine 127/cysteine 128. A lipid anchor (O-palmitoleoyl serine; by PORCN) is attached at serine 9. Residue asparagine 91 is glycosylated (N-linked (GlcNAc...) asparagine).

This sequence belongs to the Wnt family. Palmitoleoylation is required for efficient binding to frizzled receptors. Depalmitoleoylation leads to Wnt signaling pathway inhibition. In terms of tissue distribution, in embryo, in dorsal hindbrain; in adults, in brain.

It is found in the secreted. The protein resides in the extracellular space. It localises to the extracellular matrix. Functionally, ligand for members of the frizzled family of seven transmembrane receptors. Probable developmental protein. May be a signaling molecule which affects the development of discrete regions of tissues. Is likely to signal over only few cell diameters. This is Protein Wnt-10 (wnt10) from Xenopus laevis (African clawed frog).